The following is a 192-amino-acid chain: MSLDTVVEDIRDEARARADEIRSEGEERAEEIIDEAEREADDIVDEAEREAERKISQERDQKLSSAKLEAKQARLEARREVLEEVHDDVEAQIADIDGDEREALTRSLLDAAAEEFDGDSVRVHGHEDDADLLEGIVADYDGFEVGEPVDCLGGVVVESDASRVRVNNTFDSILEDVWEENLREISARLFEE.

Residues 1–66 (MSLDTVVEDI…QERDQKLSSA (66 aa)) form a disordered region. Basic and acidic residues predominate over residues 8-26 (EDIRDEARARADEIRSEGE). Over residues 27–49 (ERAEEIIDEAEREADDIVDEAER) the composition is skewed to acidic residues. Residues 50-66 (EAERKISQERDQKLSSA) are compositionally biased toward basic and acidic residues.

It belongs to the V-ATPase E subunit family. As to quaternary structure, has multiple subunits with at least A(3), B(3), C, D, E, F, H, I and proteolipid K(x).

It is found in the cell membrane. Component of the A-type ATP synthase that produces ATP from ADP in the presence of a proton gradient across the membrane. This chain is A-type ATP synthase subunit E, found in Natronomonas pharaonis (strain ATCC 35678 / DSM 2160 / CIP 103997 / JCM 8858 / NBRC 14720 / NCIMB 2260 / Gabara) (Halobacterium pharaonis).